Here is a 271-residue protein sequence, read N- to C-terminus: Shikimate dehydrogenase-like protein HI_0607 (271 aa).

Residue lysine 67 is the Proton donor/acceptor of the active site. Aspartate 103 contacts substrate. NADP(+) contacts are provided by residues 126–130 (GSGGM), lysine 154, and serine 184.

The protein belongs to the shikimate dehydrogenase-like family. Homodimer.

The enzyme catalyses shikimate + NADP(+) = 3-dehydroshikimate + NADPH + H(+). Functionally, in vitro, is able to catalyze the NADP(+)-dependent oxidation of shikimate to 3-dehydroshikimate. However, has much lower activity than classical shikimate dehydrogenases AroE, indicating that shikimate may not be the biological substrate. Cannot utilize NAD(+) instead of NADP(+). Is not able to catalyze the oxidation of quinate. In Haemophilus influenzae (strain ATCC 51907 / DSM 11121 / KW20 / Rd), this protein is Shikimate dehydrogenase-like protein HI_0607.